The following is a 191-amino-acid chain: ATP synthase subunit b 2 (191 aa).

Residues Met1 to Glu12 show a composition bias toward basic and acidic residues. A disordered region spans residues Met1 to Pro31. A helical membrane pass occupies residues Pro38–Leu60.

The protein belongs to the ATPase B chain family. As to quaternary structure, F-type ATPases have 2 components, F(1) - the catalytic core - and F(0) - the membrane proton channel. F(1) has five subunits: alpha(3), beta(3), gamma(1), delta(1), epsilon(1). F(0) has three main subunits: a(1), b(2) and c(10-14). The alpha and beta chains form an alternating ring which encloses part of the gamma chain. F(1) is attached to F(0) by a central stalk formed by the gamma and epsilon chains, while a peripheral stalk is formed by the delta and b chains.

It is found in the cell inner membrane. In terms of biological role, f(1)F(0) ATP synthase produces ATP from ADP in the presence of a proton or sodium gradient. F-type ATPases consist of two structural domains, F(1) containing the extramembraneous catalytic core and F(0) containing the membrane proton channel, linked together by a central stalk and a peripheral stalk. During catalysis, ATP synthesis in the catalytic domain of F(1) is coupled via a rotary mechanism of the central stalk subunits to proton translocation. Its function is as follows. Component of the F(0) channel, it forms part of the peripheral stalk, linking F(1) to F(0). The b'-subunit is a diverged and duplicated form of b found in plants and photosynthetic bacteria. The chain is ATP synthase subunit b 2 (atpF2) from Bradyrhizobium sp. (strain ORS 278).